The sequence spans 296 residues: Deleted in azoospermia-like (296 aa).

The segment covering M1 to N18 has biased composition (polar residues). A disordered region spans residues M1–A25. The region spanning N40–R115 is the RRM domain. Residues K80–N132 form a homodimerization region. The DAZ domain maps to A167–Q190. Y277 is subject to Phosphotyrosine.

The protein belongs to the RRM DAZ family. In terms of assembly, homodimer and heterodimer. Forms a heterodimer with DAZ. Interacts with BOLL, DAZAP1 and DAZAP2. Interacts with PUM2 Multiple DAZL RRMs can bind to a single RNA containing multiple GUU triplets. As to expression, testis specific.

Its subcellular location is the cytoplasm. The protein resides in the nucleus. Its function is as follows. RNA-binding protein, which is essential for gametogenesis in both males and females. Plays a central role during spermatogenesis. Acts by binding to the 3'-UTR of mRNA, specifically recognizing GUU triplets, and thereby regulating the translation of key transcripts. In Callithrix jacchus (White-tufted-ear marmoset), this protein is Deleted in azoospermia-like (DAZL).